The chain runs to 362 residues: sn-glycerol-3-phosphate import ATP-binding protein UgpC (362 aa).

One can recognise an ABC transporter domain in the interval 4–235; sequence LTLQSVKKTY…PATVFVASFI (232 aa). 37–44 contributes to the ATP binding site; sequence GPSGCGKS.

Belongs to the ABC transporter superfamily. sn-glycerol-3-phosphate importer (TC 3.A.1.1.3) family. In terms of assembly, the complex is composed of two ATP-binding proteins (UgpC), two transmembrane proteins (UgpA and UgpE) and a solute-binding protein (UgpB).

It localises to the cell inner membrane. The catalysed reaction is sn-glycerol 3-phosphate(out) + ATP + H2O = sn-glycerol 3-phosphate(in) + ADP + phosphate + H(+). Its function is as follows. Part of the ABC transporter complex UgpBAEC involved in sn-glycerol-3-phosphate (G3P) import. Responsible for energy coupling to the transport system. This chain is sn-glycerol-3-phosphate import ATP-binding protein UgpC, found in Paraburkholderia xenovorans (strain LB400).